A 234-amino-acid chain; its full sequence is 1-(5-phosphoribosyl)-5-[(5-phosphoribosylamino)methylideneamino] imidazole-4-carboxamide isomerase (234 aa).

Asp9 (proton acceptor) is an active-site residue. Asp131 functions as the Proton donor in the catalytic mechanism.

Belongs to the HisA/HisF family.

Its subcellular location is the cytoplasm. The catalysed reaction is 1-(5-phospho-beta-D-ribosyl)-5-[(5-phospho-beta-D-ribosylamino)methylideneamino]imidazole-4-carboxamide = 5-[(5-phospho-1-deoxy-D-ribulos-1-ylimino)methylamino]-1-(5-phospho-beta-D-ribosyl)imidazole-4-carboxamide. Its pathway is amino-acid biosynthesis; L-histidine biosynthesis; L-histidine from 5-phospho-alpha-D-ribose 1-diphosphate: step 4/9. This chain is 1-(5-phosphoribosyl)-5-[(5-phosphoribosylamino)methylideneamino] imidazole-4-carboxamide isomerase, found in Staphylococcus aureus (strain JH1).